A 479-amino-acid chain; its full sequence is Glutamate--tRNA ligase (479 aa).

A 'HIGH' region motif is present at residues proline 21–glycine 31. Residues lysine 248–arginine 252 carry the 'KMSKS' region motif. An ATP-binding site is contributed by lysine 251.

Belongs to the class-I aminoacyl-tRNA synthetase family. Glutamate--tRNA ligase type 1 subfamily. In terms of assembly, monomer.

It localises to the cytoplasm. It catalyses the reaction tRNA(Glu) + L-glutamate + ATP = L-glutamyl-tRNA(Glu) + AMP + diphosphate. In terms of biological role, catalyzes the attachment of glutamate to tRNA(Glu) in a two-step reaction: glutamate is first activated by ATP to form Glu-AMP and then transferred to the acceptor end of tRNA(Glu). The chain is Glutamate--tRNA ligase from Actinobacillus pleuropneumoniae serotype 5b (strain L20).